Consider the following 541-residue polypeptide: Protein VAPYRIN (541 aa).

The region spanning 4–138 (LIKLDPSNIV…IDSAIKVMFV (135 aa)) is the MSP domain. 10 ANK repeats span residues 176–205 (QGQTLLHLAISKTRPDLVQLILEFKPDIEA), 209–238 (VGSTPLEAASSSGESLIVELLLAHKANTEG), 242–271 (SVFRPIHHASREGHMEILRLLLLKGARVDS), 275–304 (DGNTSLHLAVEEKRRDCARLLLANGARTDV), 309–338 (EGDTPLHIAAANGDENMVKLLLHKGATKYV), 342–372 (LGKTAFDVAAENGHSRLFDALRLGDNLCAAA), 374–392 (KGEVRTIQKVLESGGVING), 396–425 (NGWTSLHRAAFKGRMDAVRFLVEKGIDLDA), 429–458 (DGYTALHCAAESGHADVTEFLVKKGADVEA), and 462–491 (KGVSALQIVESLNYVGITRILVNGGASREG).

In terms of assembly, interacts with EX70I at the periarbuscular membrane (PAM) around the arbuscule hyphal tips. In terms of tissue distribution, expressed in roots.

The protein resides in the cytoplasm. It is found in the nucleus. Its subcellular location is the cell membrane. Functionally, required for arbuscular mycorrhizal (AM) symbiosis with AM fungi (e.g. Glomus versiforme and Gigaspora gigantea) both during fungal passage across root epidermis and for arbuscule formation in cortical cells; this symbiosis promotes phosphorus (P) and copper (Cu) uptake. Essential for infection by symbiotic nitrogen-fixing rhizobial bacteria (e.g. Sinorhizobium meliloti) leading to the formation of root nodules. The protein is Protein VAPYRIN of Medicago truncatula (Barrel medic).